The sequence spans 313 residues: BTB/POZ domain-containing adapter for CUL3-mediated RhoA degradation protein 3 (313 aa).

Met1 carries the post-translational modification N-acetylmethionine. Ser23 carries the phosphoserine modification. The region spanning 32–100 is the BTB domain; the sequence is KYVKLNVGGA…LRDGAVPLPE (69 aa). A PCNA-binding motif is present at residues 239-245; sequence QTKVEFP.

This sequence belongs to the BACURD family. In terms of assembly, homotetramer; forms a two-fold symmetric tetramer in solution. Interacts with CUL3; interaction is direct and forms a 5:5 heterodecamer. Component of the BCR(BACURD3) E3 ubiquitin ligase complex, at least composed of CUL3, KCTD10/BACURD3 and RBX1. Interacts with DNA polymerase delta subunit 2/POLD2. Interacts with PCNA.

The protein resides in the nucleus. Its pathway is protein modification; protein ubiquitination. Functionally, substrate-specific adapter of a BCR (BTB-CUL3-RBX1) E3 ubiquitin-protein ligase complex. The BCR(BACURD3) E3 ubiquitin ligase complex mediates the ubiquitination of target proteins, leading to their degradation by the proteasome. The chain is BTB/POZ domain-containing adapter for CUL3-mediated RhoA degradation protein 3 (KCTD10) from Homo sapiens (Human).